The sequence spans 181 residues: Oligoribonuclease (181 aa).

Positions 8-171 (LIWLDMEMTG…ADILESIEEM (164 aa)) constitute an Exonuclease domain. Tyr129 is a catalytic residue.

This sequence belongs to the oligoribonuclease family.

The protein localises to the cytoplasm. Functionally, 3'-to-5' exoribonuclease specific for small oligoribonucleotides. The polypeptide is Oligoribonuclease (Chromobacterium violaceum (strain ATCC 12472 / DSM 30191 / JCM 1249 / CCUG 213 / NBRC 12614 / NCIMB 9131 / NCTC 9757 / MK)).